Here is a 358-residue protein sequence, read N- to C-terminus: MSNQVSLVDDIISEYQGIEMQMADPEVAGDQSQFRKLSKRYAELRPIVAVNEELVQARQDLADAKEMAYEDHEFQSEVDRLEPLVVQLEEQLADLLAPRDEHDSEDIIMEIKAGAGGEEAALFAGDLARMYERFADKAGFQWEVLGLNESDLGGVKDMSISFKSKTPSRDGAWSVFKFEGGVHRVQRVPVTESQGRIQTSAAGVLVYPEPEEIDSVNIDDKDIRVDVYRSSGKGGQGVNTTDSAVRITHLPTGLVVTCQKERSQIQNKARALQVLQARLDQMEREAREAEAGEQRASQVRTMDRSERIRTYNWPENRITDHRIGYKANNLDSVLDGDMQDLIEALQAQERAERLEAEG.

Position 236 is an N5-methylglutamine (glutamine 236).

This sequence belongs to the prokaryotic/mitochondrial release factor family. Methylated by PrmC. Methylation increases the termination efficiency of RF1.

It is found in the cytoplasm. In terms of biological role, peptide chain release factor 1 directs the termination of translation in response to the peptide chain termination codons UAG and UAA. The chain is Peptide chain release factor 1 from Corynebacterium aurimucosum (strain ATCC 700975 / DSM 44827 / CIP 107346 / CN-1) (Corynebacterium nigricans).